Consider the following 338-residue polypeptide: Ketol-acid reductoisomerase (NADP(+)) (338 aa).

Residues 1–181 (MQIFYDKDCD…GGGRTGIIET (181 aa)) form the KARI N-terminal Rossmann domain. NADP(+)-binding positions include 24 to 27 (YGSQ), Arg47, Ser50, Ser52, and 82 to 85 (DEFQ). Residue His107 is part of the active site. Gly133 is an NADP(+) binding site. The KARI C-terminal knotted domain maps to 182 to 327 (SFREETETDL…AKLRAMMPWI (146 aa)). Residues Asp190, Glu194, Glu226, and Glu230 each contribute to the Mg(2+) site. Ser251 contributes to the substrate binding site.

Belongs to the ketol-acid reductoisomerase family. The cofactor is Mg(2+).

The enzyme catalyses (2R)-2,3-dihydroxy-3-methylbutanoate + NADP(+) = (2S)-2-acetolactate + NADPH + H(+). It catalyses the reaction (2R,3R)-2,3-dihydroxy-3-methylpentanoate + NADP(+) = (S)-2-ethyl-2-hydroxy-3-oxobutanoate + NADPH + H(+). It functions in the pathway amino-acid biosynthesis; L-isoleucine biosynthesis; L-isoleucine from 2-oxobutanoate: step 2/4. Its pathway is amino-acid biosynthesis; L-valine biosynthesis; L-valine from pyruvate: step 2/4. Involved in the biosynthesis of branched-chain amino acids (BCAA). Catalyzes an alkyl-migration followed by a ketol-acid reduction of (S)-2-acetolactate (S2AL) to yield (R)-2,3-dihydroxy-isovalerate. In the isomerase reaction, S2AL is rearranged via a Mg-dependent methyl migration to produce 3-hydroxy-3-methyl-2-ketobutyrate (HMKB). In the reductase reaction, this 2-ketoacid undergoes a metal-dependent reduction by NADPH to yield (R)-2,3-dihydroxy-isovalerate. The protein is Ketol-acid reductoisomerase (NADP(+)) of Acinetobacter baumannii (strain AB0057).